The primary structure comprises 87 residues: Small ribosomal subunit protein bS20 (87 aa).

The tract at residues 1–28 is disordered; it reads MANIKSQQKRNRTNERARLRNKSVKSSL.

Belongs to the bacterial ribosomal protein bS20 family.

Binds directly to 16S ribosomal RNA. This is Small ribosomal subunit protein bS20 from Mycobacterium marinum (strain ATCC BAA-535 / M).